The following is a 156-amino-acid chain: Endoribonuclease YbeY (156 aa).

Residues His122, His126, and His132 each coordinate Zn(2+).

Belongs to the endoribonuclease YbeY family. It depends on Zn(2+) as a cofactor.

Its subcellular location is the cytoplasm. Functionally, single strand-specific metallo-endoribonuclease involved in late-stage 70S ribosome quality control and in maturation of the 3' terminus of the 16S rRNA. The chain is Endoribonuclease YbeY from Bacillus mycoides (strain KBAB4) (Bacillus weihenstephanensis).